Reading from the N-terminus, the 542-residue chain is CTP synthase (542 aa).

An amidoligase domain region spans residues 1 to 265 (MTRYVFITGG…DREVLGHFGL (265 aa)). Ser13 provides a ligand contact to CTP. Ser13 provides a ligand contact to UTP. ATP is bound by residues 14–19 (SLGKGL) and Asp71. Residues Asp71 and Glu139 each coordinate Mg(2+). CTP is bound by residues 146–148 (DIE), 186–191 (KTKPTQ), and Lys222. UTP-binding positions include 186 to 191 (KTKPTQ) and Lys222. The Glutamine amidotransferase type-1 domain maps to 291–541 (SIAIVGKYTG…VGAAIEQSRL (251 aa)). Gly353 contributes to the L-glutamine binding site. Catalysis depends on Cys380, which acts as the Nucleophile; for glutamine hydrolysis. L-glutamine is bound by residues 381-384 (FGMQ), Glu404, and Arg469. Catalysis depends on residues His514 and Glu516.

This sequence belongs to the CTP synthase family. Homotetramer.

It catalyses the reaction UTP + L-glutamine + ATP + H2O = CTP + L-glutamate + ADP + phosphate + 2 H(+). The catalysed reaction is L-glutamine + H2O = L-glutamate + NH4(+). It carries out the reaction UTP + NH4(+) + ATP = CTP + ADP + phosphate + 2 H(+). Its pathway is pyrimidine metabolism; CTP biosynthesis via de novo pathway; CTP from UDP: step 2/2. With respect to regulation, allosterically activated by GTP, when glutamine is the substrate; GTP has no effect on the reaction when ammonia is the substrate. The allosteric effector GTP functions by stabilizing the protein conformation that binds the tetrahedral intermediate(s) formed during glutamine hydrolysis. Inhibited by the product CTP, via allosteric rather than competitive inhibition. In terms of biological role, catalyzes the ATP-dependent amination of UTP to CTP with either L-glutamine or ammonia as the source of nitrogen. Regulates intracellular CTP levels through interactions with the four ribonucleotide triphosphates. The polypeptide is CTP synthase (Methylobacterium radiotolerans (strain ATCC 27329 / DSM 1819 / JCM 2831 / NBRC 15690 / NCIMB 10815 / 0-1)).